A 450-amino-acid chain; its full sequence is Exodeoxyribonuclease 7 large subunit (450 aa).

Belongs to the XseA family. As to quaternary structure, heterooligomer composed of large and small subunits.

It is found in the cytoplasm. The enzyme catalyses Exonucleolytic cleavage in either 5'- to 3'- or 3'- to 5'-direction to yield nucleoside 5'-phosphates.. In terms of biological role, bidirectionally degrades single-stranded DNA into large acid-insoluble oligonucleotides, which are then degraded further into small acid-soluble oligonucleotides. This is Exodeoxyribonuclease 7 large subunit from Listeria monocytogenes serotype 4b (strain CLIP80459).